The chain runs to 330 residues: MEKALNFEQYVNLADPKLGAEAIFATDDFFADKSRLIRTEAAEWKEDLYDDNGKWMDGWESRRKRSEGYDFCVVRLGLAGTIAGLDIDTSFFTGNFPPSASVDACYSPDGEPSDSTEWQEILSSQSLQGDSHHLHALDNEQVFTHVRLNIYPDGGVARLRVYGRPSVNWDQIGIDQEVDLAAVVNGGRALACSDEHFGKKSNILGPGRGENMGDGWETARRRTPGNDWVIVALGRPGKIGKVVVDTAHFKGNFPDSCSIQAAYVQGGTDDQVETQSLFWRELMPSQKLSAHNIQEFVEQVNDLGAVTHVRLNIFPDGGISRLRLFGFKSE.

The protein belongs to the allantoicase family.

The enzyme catalyses allantoate + H2O = (S)-ureidoglycolate + urea. It functions in the pathway nitrogen metabolism; (S)-allantoin degradation; (S)-ureidoglycolate from allantoate (aminidohydrolase route): step 1/1. The protein is Probable allantoicase of Photobacterium profundum (strain SS9).